The primary structure comprises 152 residues: Homeobox protein ceh-63 (152 aa).

The segment covering 21–30 (NDTNSSQQIK) has biased composition (polar residues). Disordered regions lie at residues 21–48 (NDTN…RTTF) and 92–126 (RRTK…SQHV). A compositionally biased stretch (basic residues) spans 35–44 (PPKRSNRPTK). Positions 41-100 (RPTKRTTFTSEQVTLLELEFAKNEYICKDRRGELAQTIELTECQVKTWFQNRRTKKRRCT) form a DNA-binding region, homeobox. Positions 116–126 (PSPQNPSSQHV) are enriched in polar residues.

As to quaternary structure, may interact with homeobox protein ceh-14.

It localises to the nucleus. Its function is as follows. Probable transcription factor, modulating expression of helix-loop-helix protein mbr-1, perhaps acting in concert with homeobox protein ceh-14. May play a minor role in axon guidance in the DVC interneuron. The polypeptide is Homeobox protein ceh-63 (Caenorhabditis elegans).